A 269-amino-acid polypeptide reads, in one-letter code: 4-hydroxy-tetrahydrodipicolinate reductase (269 aa).

9–14 (GVAGRM) contributes to the NAD(+) binding site. Arg-36 lines the NADP(+) pocket. NAD(+)-binding positions include 99 to 101 (GTT) and 123 to 126 (APNM). His-156 functions as the Proton donor/acceptor in the catalytic mechanism. Position 157 (His-157) interacts with (S)-2,3,4,5-tetrahydrodipicolinate. The active-site Proton donor is the Lys-160. 166 to 167 (GT) lines the (S)-2,3,4,5-tetrahydrodipicolinate pocket.

Belongs to the DapB family.

Its subcellular location is the cytoplasm. It carries out the reaction (S)-2,3,4,5-tetrahydrodipicolinate + NAD(+) + H2O = (2S,4S)-4-hydroxy-2,3,4,5-tetrahydrodipicolinate + NADH + H(+). It catalyses the reaction (S)-2,3,4,5-tetrahydrodipicolinate + NADP(+) + H2O = (2S,4S)-4-hydroxy-2,3,4,5-tetrahydrodipicolinate + NADPH + H(+). It participates in amino-acid biosynthesis; L-lysine biosynthesis via DAP pathway; (S)-tetrahydrodipicolinate from L-aspartate: step 4/4. Catalyzes the conversion of 4-hydroxy-tetrahydrodipicolinate (HTPA) to tetrahydrodipicolinate. In Methylococcus capsulatus (strain ATCC 33009 / NCIMB 11132 / Bath), this protein is 4-hydroxy-tetrahydrodipicolinate reductase.